Consider the following 633-residue polypeptide: MDYEEILFGLQPILNASSIKDVPMNDVYLGSYLAVMDQLAVSLREPSNRDIVGKTGLLLNLVRVLEQALDICFHDTSISINDKIAFYEISSEVIRCIANAIIDNDDNREILLDSGGKKLLNYYIGGVLQLDEISSDKSEDSLVDKLQMRSVVLLRNFCIGNLKYTENLAPFIRGPLFVLLKTTQYSYLSSPEKVVLGSDLLNDILKVNYSNVQISDLFFLSQYIKKISSNVQNKELQAMEDGAVEAYSNTETQKFAGQGNQEYIEKEEEDDEEDVNCELLLNLSTCLETIVAKDETINFTNEEQLVLSMQKNLILSLVCLESKTFNNKLIVMRRLISCAGNISANLTNSNKREQSLCIETIKSSASSYALAAALMILCNSVASKSDAVALLKLISLSELIQVGSLLQDPLQYQGFLDLLRKLLNLENTMWLDIKDLFTLFQIMRRCHEQTKYYNNLRSLLTNLLNKTLTVLPSSKIHNSISSDPTIISFIAEHGTLTSCIAMDKLLVSKKALPKEAITSLWDSIFKFQNLGQAEQLSISDLFHITKTVGIYLKDSSVTADVNPIENILFKDYIQKLTLILETILSFKENKDKGSESCFNNGKFIAGIILNIVKNTKCLTPEEQNLEALAKSFF.

As to quaternary structure, interacts with CDC42; the interaction is direct. Interacts with RHO1; the interaction is direct. Interacts with RHO2. Interacts with RHO4. Interacts with CDC11.

The protein resides in the nucleus. Its subcellular location is the cytoplasm. Functionally, probably acts as a GEF (guanine nucleotide exchange factor) for the Rho family of small GTP-binding proteins (G proteins) that stimulates the dissociation of GDP to enable subsequent binding of GTP. May also chaperone the processing and/or trafficking of small GTPases independently of GEF activity. Involved in the control of polarized cell growth via CDC42-mediated signaling. Involved in the control of cell-wall organization via RHO1-mediated signaling. May also function via RHO2 and RHO4. In Saccharomyces cerevisiae (strain ATCC 204508 / S288c) (Baker's yeast), this protein is GTPase-GDP dissociation stimulator BEM4.